The chain runs to 1468 residues: DNA polymerase III PolC-type (1468 aa).

A disordered region spans residues 197 to 217 (QKSLEDSAPPSEEVTPTQNYD). Residues 430–586 (YVVFDVETTG…YDAEATGRLL (157 aa)) form the Exonuclease domain.

Belongs to the DNA polymerase type-C family. PolC subfamily.

The protein resides in the cytoplasm. The enzyme catalyses DNA(n) + a 2'-deoxyribonucleoside 5'-triphosphate = DNA(n+1) + diphosphate. Its function is as follows. Required for replicative DNA synthesis. This DNA polymerase also exhibits 3' to 5' exonuclease activity. In Streptococcus agalactiae serotype III (strain NEM316), this protein is DNA polymerase III PolC-type.